The chain runs to 241 residues: 2-C-methyl-D-erythritol 4-phosphate cytidylyltransferase (241 aa).

It belongs to the IspD/TarI cytidylyltransferase family. IspD subfamily.

It carries out the reaction 2-C-methyl-D-erythritol 4-phosphate + CTP + H(+) = 4-CDP-2-C-methyl-D-erythritol + diphosphate. It functions in the pathway isoprenoid biosynthesis; isopentenyl diphosphate biosynthesis via DXP pathway; isopentenyl diphosphate from 1-deoxy-D-xylulose 5-phosphate: step 2/6. Catalyzes the formation of 4-diphosphocytidyl-2-C-methyl-D-erythritol from CTP and 2-C-methyl-D-erythritol 4-phosphate (MEP). The chain is 2-C-methyl-D-erythritol 4-phosphate cytidylyltransferase from Baumannia cicadellinicola subsp. Homalodisca coagulata.